Reading from the N-terminus, the 424-residue chain is Glutamyl-tRNA reductase (424 aa).

Substrate is bound by residues T50–R53, S98, E103–Q105, and Q109. C51 (nucleophile) is an active-site residue. Position 178–183 (G178–G183) interacts with NADP(+).

It belongs to the glutamyl-tRNA reductase family. As to quaternary structure, homodimer.

The enzyme catalyses (S)-4-amino-5-oxopentanoate + tRNA(Glu) + NADP(+) = L-glutamyl-tRNA(Glu) + NADPH + H(+). Its pathway is porphyrin-containing compound metabolism; protoporphyrin-IX biosynthesis; 5-aminolevulinate from L-glutamyl-tRNA(Glu): step 1/2. Its function is as follows. Catalyzes the NADPH-dependent reduction of glutamyl-tRNA(Glu) to glutamate 1-semialdehyde (GSA). This is Glutamyl-tRNA reductase from Methanoregula boonei (strain DSM 21154 / JCM 14090 / 6A8).